A 270-amino-acid chain; its full sequence is Cell division protein DivIB (270 aa).

The Cytoplasmic segment spans residues 1-38 (MTRRNNPELNDEREPIDKIKASIDLKKKTIRRNKRKRR). Residues 39–59 (LIKMLQFLIVIGVLIGIYYFD) traverse the membrane as a helical segment. The Extracellular segment spans residues 60–270 (KSDASRVHNV…QSAVVKACGS (211 aa)). Residues 64–135 (SRVHNVRVNG…INLNVTEKKA (72 aa)) form the POTRA domain.

It belongs to the FtsQ/DivIB family. DivIB subfamily.

It is found in the cell membrane. Its function is as follows. Cell division protein that may be involved in stabilizing or promoting the assembly of the division complex. The chain is Cell division protein DivIB from Erysipelothrix rhusiopathiae (strain Fujisawa).